We begin with the raw amino-acid sequence, 432 residues long: Enolase (432 aa).

Glutamine 166 lines the (2R)-2-phosphoglycerate pocket. The active-site Proton donor is glutamate 208. 3 residues coordinate Mg(2+): aspartate 245, glutamate 291, and aspartate 318. (2R)-2-phosphoglycerate contacts are provided by lysine 343, arginine 372, serine 373, and lysine 394. Catalysis depends on lysine 343, which acts as the Proton acceptor.

This sequence belongs to the enolase family. It depends on Mg(2+) as a cofactor.

Its subcellular location is the cytoplasm. It localises to the secreted. The protein resides in the cell surface. It catalyses the reaction (2R)-2-phosphoglycerate = phosphoenolpyruvate + H2O. It participates in carbohydrate degradation; glycolysis; pyruvate from D-glyceraldehyde 3-phosphate: step 4/5. Its function is as follows. Catalyzes the reversible conversion of 2-phosphoglycerate (2-PG) into phosphoenolpyruvate (PEP). It is essential for the degradation of carbohydrates via glycolysis. The protein is Enolase of Leptospira interrogans serogroup Icterohaemorrhagiae serovar copenhageni (strain Fiocruz L1-130).